Here is a 455-residue protein sequence, read N- to C-terminus: Serine--tRNA ligase (455 aa).

252–254 (TAE) contributes to the L-serine binding site. Residues 283–285 (RKE) and Val-299 each bind ATP. Glu-306 is an L-serine binding site. ATP is bound at residue 370-373 (EVVS). Residue Thr-406 coordinates L-serine.

The protein belongs to the class-II aminoacyl-tRNA synthetase family. Type-1 seryl-tRNA synthetase subfamily. In terms of assembly, homodimer. The tRNA molecule binds across the dimer.

It is found in the cytoplasm. The enzyme catalyses tRNA(Ser) + L-serine + ATP = L-seryl-tRNA(Ser) + AMP + diphosphate + H(+). It carries out the reaction tRNA(Sec) + L-serine + ATP = L-seryl-tRNA(Sec) + AMP + diphosphate + H(+). It participates in aminoacyl-tRNA biosynthesis; selenocysteinyl-tRNA(Sec) biosynthesis; L-seryl-tRNA(Sec) from L-serine and tRNA(Sec): step 1/1. Its function is as follows. Catalyzes the attachment of serine to tRNA(Ser). Is also able to aminoacylate tRNA(Sec) with serine, to form the misacylated tRNA L-seryl-tRNA(Sec), which will be further converted into selenocysteinyl-tRNA(Sec). The protein is Serine--tRNA ligase of Pyrococcus abyssi (strain GE5 / Orsay).